The following is a 1464-amino-acid chain: Glutamate receptor ionotropic, NMDA 2A (1464 aa).

Residues Met1–Ala22 form the signal peptide. The Extracellular portion of the chain corresponds to Pro23–Ser556. His44 is a Zn(2+) binding site. An N-linked (GlcNAc...) asparagine glycan is attached at Asn75. Cys87 and Cys320 form a disulfide bridge. Positions 128, 266, and 282 each coordinate Zn(2+). 4 N-linked (GlcNAc...) asparagine glycosylation sites follow: Asn340, Asn380, Asn443, and Asn444. 2 disulfides stabilise this stretch: Cys429-Cys455 and Cys436-Cys456. Positions 511, 513, and 518 each coordinate L-glutamate. N-linked (GlcNAc...) asparagine glycosylation occurs at Asn541. The chain crosses the membrane as a helical span at residues Val557–Phe576. At Glu577–Thr600 the chain is on the cytoplasmic side. The tract at residues Phe599 to Gln620 is pore-forming. Residues Ile601–Asn615 constitute an intramembrane region (discontinuously helical). The Cytoplasmic segment spans residues Ser616–Thr625. The helical transmembrane segment at Thr626–Thr646 threads the bilayer. The Extracellular segment spans residues Ala647–Ile814. A glycan (N-linked (GlcNAc...) asparagine) is linked at Asn687. Residues Ser689, Thr690, and Asp731 each contribute to the L-glutamate site. Cys745 and Cys800 form a disulfide bridge. The chain crosses the membrane as a helical span at residues Asp815–Phe835. Residues Ile836–Val1464 lie on the Cytoplasmic side of the membrane. 3 positions are modified to phosphoserine: Ser882, Ser890, and Ser929. Composition is skewed to polar residues over residues Ser1001 to Pro1010 and Gln1023 to Ser1032. 2 disordered regions span residues Ser1001–Arg1088 and Pro1148–Asn1180. The residue at position 1025 (Ser1025) is a Phosphoserine. Composition is skewed to basic and acidic residues over residues Gln1033–Thr1043 and Leu1052–Ile1061. Phosphoserine occurs at positions 1059 and 1062. Residues Cys1070–Lys1087 are compositionally biased toward basic and acidic residues. Residues Leu1165–Asn1180 are compositionally biased toward polar residues. A phosphoserine mark is found at Ser1198 and Ser1291. A disordered region spans residues Lys1335–Arg1372. Residues Ser1462–Val1464 carry the PDZ-binding motif.

Belongs to the glutamate-gated ion channel (TC 1.A.10.1) family. NR2A/GRIN2A subfamily. In terms of assembly, heterotetramer. Forms heterotetrameric channels composed of two GluN1/zeta subunits (GRIN1), and two identical GluN2/epsilon subunits (GRIN2A, GRIN2B, GRIN2C or GRIN2D) or GluN3 subunits (GRIN3A or GRIN3B) (in vitro). Can also form heterotetrameric channels that contain at least two GluN1 subunits and at least two different GluN2 subunits (or a combination of one GluN2 and one GluN3 subunits) (in vitro). In vivo, the subunit composition may depend on the expression levels of the different subunits. Found in a complex with GRIN1, GRIN3A and PPP2CB. Found in a complex with GRIN1 and GRIN3B. Interacts with AIP1. Interacts with HIP1 and NETO1. Interacts with SNX27 (via PDZ domain); the interaction is required for recycling to the plasma membrane when endocytosed and prevent degradation in lysosomes. Interacts with PDZ domains of PATJ and DLG4. Interacts with LRFN2. Interacts with RPH3A and DLG4; this ternary complex regulates NMDA receptor composition at postsynaptic membranes. Interacts with SORCS2. Interacts with ARC; preventing ARC oligomerization. Interacts (via the extreme C-terminus) with FRMPD2 (the second PDZ domain); the interaction is direct and is likely to promote NMDAR-mediated neural signal transmission. GRIN2A binds FRMPD2 with lower affinity than GRIN2B.

The protein localises to the cell projection. It localises to the dendritic spine. The protein resides in the cell membrane. It is found in the synapse. Its subcellular location is the postsynaptic cell membrane. The protein localises to the cytoplasmic vesicle membrane. It catalyses the reaction Ca(2+)(in) = Ca(2+)(out). The catalysed reaction is Na(+)(in) = Na(+)(out). It carries out the reaction K(+)(in) = K(+)(out). Component of N-methyl-D-aspartate (NMDA) receptors (NMDARs) that function as heterotetrameric, ligand-gated cation channels with high calcium permeability and voltage-dependent block by Mg(2+). NMDARs participate in synaptic plasticity for learning and memory formation by contributing to the slow phase of excitatory postsynaptic current, long-term synaptic potentiation, and learning. Channel activation requires binding of the neurotransmitter L-glutamate to the GluN2 subunit, glycine or D-serine binding to the GluN1 subunit, plus membrane depolarization to eliminate channel inhibition by Mg(2+). NMDARs mediate simultaneously the potasium efflux and the influx of calcium and sodium. Each GluN2 subunit confers differential attributes to channel properties, including activation, deactivation and desensitization kinetics, pH sensitivity, Ca2(+) permeability, and binding to allosteric modulators. Participates in the synaptic plasticity regulation through activation by the L-glutamate releaseed by BEST1, into the synaptic cleft, upon F2R/PAR-1 activation in astrocyte. The sequence is that of Glutamate receptor ionotropic, NMDA 2A from Pan troglodytes (Chimpanzee).